The sequence spans 268 residues: tRNA pseudouridine synthase A (268 aa).

D52 acts as the Nucleophile in catalysis. Y113 is a substrate binding site.

Belongs to the tRNA pseudouridine synthase TruA family. In terms of assembly, homodimer.

It carries out the reaction uridine(38/39/40) in tRNA = pseudouridine(38/39/40) in tRNA. Formation of pseudouridine at positions 38, 39 and 40 in the anticodon stem and loop of transfer RNAs. The protein is tRNA pseudouridine synthase A of Rhizobium leguminosarum bv. trifolii (strain WSM2304).